The primary structure comprises 610 residues: Solute carrier family 2, facilitated glucose transporter member 12 (610 aa).

The Cytoplasmic portion of the chain corresponds to 1–49 (MDAPEESIRMTSDPQSKIYVQNPDTHIHLEQGPSAKSGNGRALVLCSVS). A helical transmembrane segment spans residues 50-70 (VACLSGLLMGYEMSLISGALL). Over 71 to 84 (QLRDVLTLSCPEQE) the chain is Extracellular. The chain crosses the membrane as a helical span at residues 85–105 (QVVGSLLLGAFLLSLGGGTIL). The Cytoplasmic segment spans residues 106-118 (DHYGRRFTIILTA). The chain crosses the membrane as a helical span at residues 119–139 (LLCVLGTLLSVCVVSFWALVV). At 140–141 (GR) the chain is on the extracellular side. The chain crosses the membrane as a helical span at residues 142–162 (MLVGMSVALSGTASCLYAAEV). The Cytoplasmic portion of the chain corresponds to 163-176 (APAAWRGRCVCVYE). Residues 177-197 (LMVVLGMLLGFGLSWAFAGVP) form a helical membrane-spanning segment. Residues 198–201 (DGWR) lie on the Extracellular side of the membrane. Residues 202–222 (FTFGGALLPALLQAGVMPLLP) traverse the membrane as a helical segment. The Cytoplasmic portion of the chain corresponds to 223-286 (DSPRFLLAQQ…FQSRDNMLQR (64 aa)). Residues 287–307 (LLVGAALVFLQQATGQPNILA) form a helical membrane-spanning segment. The Extracellular segment spans residues 308 to 325 (YASTVLSSVGFHGNEAAT). The helical transmembrane segment at 326–346 (LASTGFGVVKVGGTIPAIFLV) threads the bilayer. Residues 347 to 353 (DKVGPKA) are Cytoplasmic-facing. A helical transmembrane segment spans residues 354-374 (LLCVGVVVMMLSTATLGAITM). At 375–475 (QSRTHVSSLC…LHEVSPSLKW (101 aa)) the chain is on the extracellular side. N-linked (GlcNAc...) asparagine glycans are attached at residues asparagine 392, asparagine 429, and asparagine 438. Residues 476–496 (ISLVSLLVYVAGFSISLGPMV) traverse the membrane as a helical segment. Over 497–511 (HVVLSAIFPTGIRGK) the chain is Cytoplasmic. The helical transmembrane segment at 512–532 (AVSVISAFNWATNLLISMTFL) threads the bilayer. Topologically, residues 533–542 (TLTERIGLPT) are extracellular. Residues 543–563 (VIFSYSAMSFLLVVFVIVFVP) traverse the membrane as a helical segment. The Cytoplasmic portion of the chain corresponds to 564-610 (ETKGRSLEQISKELAMKNHLRGTLLCHRRKHKATAQPSQEEKALATV).

It belongs to the major facilitator superfamily. Sugar transporter (TC 2.A.1.1) family. Glucose transporter subfamily. Expressed in the main insulin-sensitive tissues, such as cardiac muscle, skeletal muscle and adipose tissue.

It is found in the cell membrane. The protein resides in the endomembrane system. It localises to the cytoplasm. The protein localises to the perinuclear region. It carries out the reaction D-glucose(out) = D-glucose(in). Its function is as follows. Insulin-regulated facilitative glucose transporter. The sequence is that of Solute carrier family 2, facilitated glucose transporter member 12 from Danio rerio (Zebrafish).